The following is a 1873-amino-acid chain: Voltage-dependent L-type calcium channel subunit alpha-1S (1873 aa).

Positions 1–23 (MEPSSPQDEGLRKKQPKKPLPEV) are disordered. The Cytoplasmic segment spans residues 1–51 (MEPSSPQDEGLRKKQPKKPLPEVLPRPPRALFCLTLQNPLRKACISIVEWK). An I repeat occupies 38–337 (NPLRKACISI…LVLGVLSGEF (300 aa)). A helical transmembrane segment spans residues 52 to 70 (PFETIILLTIFANCVALAV). The Extracellular segment spans residues 71–85 (YLPMPEDDNNSLNLG). N-linked (GlcNAc...) asparagine glycosylation is present at Asn-79. The helical transmembrane segment at 86 to 106 (LEKLEYFFLTVFSIEAAMKII) threads the bilayer. At 107–115 (AYGFLFHQD) the chain is on the cytoplasmic side. A helical transmembrane segment spans residues 116-136 (AYLRSGWNVLDFIIVFLGVFT). At 137–160 (AILEQVNVIQSNTAPMSSKGAGLD) the chain is on the extracellular side. The helical transmembrane segment at 161 to 179 (VKALRAFRVLRPLRLVSGV) threads the bilayer. Residues 180-196 (PSLQVVLNSIFKAMLPL) are Cytoplasmic-facing. A helical transmembrane segment spans residues 197 to 218 (FHIALLVLFMVIIYAIIGLELF). The Extracellular portion of the chain corresponds to 219–279 (KGKMHKTCYY…HGITHFDNFG (61 aa)). 2 cysteine pairs are disulfide-bonded: Cys-226–Cys-254 and Cys-245–Cys-261. An N-linked (GlcNAc...) asparagine glycan is attached at Asn-257. Residues 280 to 301 (FSMLTVYQCITMEGWTDVLYWV) constitute an intramembrane region (pore-forming). The short motif at 290–293 (TMEG) is the Selectivity filter of repeat I element. Glu-292 contacts Ca(2+). Residues 302 to 309 (NDAIGNEW) are Extracellular-facing. A helical transmembrane segment spans residues 310–330 (PWIYFVTLILLGSFFILNLVL). Over 331–432 (GVLSGEFTKE…WKCHDLVKSR (102 aa)) the chain is Cytoplasmic. The binding to the beta subunit stretch occupies residues 357 to 374 (QQLEEDLRGYMSWITQGE). Ser-393 and Ser-397 each carry phosphoserine. An II repeat occupies 418-664 (NRVFRWKCHD…VFLAIAVDNL (247 aa)). Residues 433-451 (VFYWLVILIVALNTLSIAS) form a helical membrane-spanning segment. The Extracellular segment spans residues 452 to 462 (EHHNQPLWLTH). Residues 463–483 (LQDIANRVLLSLFTIEMLLKM) form a helical membrane-spanning segment. Residues 484–494 (YGLGLRQYFMS) are Cytoplasmic-facing. The helical transmembrane segment at 495–514 (IFNRFDCFVVCSGILELLLV) threads the bilayer. Residues 515-523 (ESGAMTPLG) lie on the Extracellular side of the membrane. A helical membrane pass occupies residues 524 to 542 (ISVLRCIRLLRLFKITKYW). Residues 543 to 561 (TSLSNLVASLLNSIRSIAS) are Cytoplasmic-facing. The helical transmembrane segment at 562–581 (LLLLLFLFIIIFALLGMQLF) threads the bilayer. Topologically, residues 582 to 601 (GGRYDFEDTEVRRSNFDNFP) are extracellular. The pore-forming intramembrane region spans 602–623 (QALISVFQVLTGEDWNSVMYNG). Positions 612 to 615 (TGED) match the Selectivity filter of repeat II motif. Glu-614 contributes to the Ca(2+) binding site. Over 624–633 (IMAYGGPSYP) the chain is Extracellular. The helical transmembrane segment at 634–653 (GVLVCIYFIILFVCGNYILL) threads the bilayer. Residues 654-799 (NVFLAIAVDN…VLCHRIVNAT (146 aa)) are Cytoplasmic-facing. 2 disordered regions span residues 673-717 (AQKA…IPTT) and 731-757 (EVKDPYPSADFPGDDEEDEPEIPVSPR). A Phosphoserine; by PKA modification is found at Ser-687. Basic and acidic residues predominate over residues 690-711 (LPDKTEEEKSVMAKKLEQKPKG). Residues 742-751 (PGDDEEDEPE) are compositionally biased toward acidic residues. The interaction with STAC, STAC2 and STAC3 (via SH3 domains) stretch occupies residues 747-760 (EDEPEIPVSPRPRP). One copy of the III repeat lies at 786–1068 (NKVRVLCHRI…IFVGFVIVTF (283 aa)). Residues 800 to 818 (WFTNFILLFILLSSAALAA) traverse the membrane as a helical segment. The Extracellular segment spans residues 819 to 830 (EDPIRAESVRNQ). A helical membrane pass occupies residues 831–850 (ILGYFDIAFTSVFTVEIVLK). At 851–866 (MTTYGAFLHKGSFCRN) the chain is on the cytoplasmic side. A helical transmembrane segment spans residues 867–885 (YFNILDLLVVAVSLISMGL). At 886 to 892 (ESSTISV) the chain is on the extracellular side. A helical membrane pass occupies residues 893–911 (VKILRVLRVLRPLRAINRA). At 912–930 (KGLKHVVQCVFVAIRTIGN) the chain is on the cytoplasmic side. The chain crosses the membrane as a helical span at residues 931-950 (IVLVTTLLQFMFACIGVQLF). Residues 951-1000 (KGKFFSCNDLSKMTEEECRGYYYVYKDGDPTQMELRPRQWIHNDFHFDNV) are Extracellular-facing. Cys-957 and Cys-968 are oxidised to a cystine. Residues 988–1077 (RQWIHNDFHF…FQEQGETEYK (90 aa)) form a dihydropyridine binding region. The segment at residues 1001–1021 (LSAMMSLFTVSTFEGWPQLLY) is an intramembrane region (pore-forming). Positions 1012-1015 (TFEG) match the Selectivity filter of repeat III motif. Glu-1014 is a Ca(2+) binding site. Topologically, residues 1022–1038 (RAIDSNEEDMGPVYNNR) are extracellular. Residues 1039–1060 (VEMAIFFIIYIILIAFFMMNIF) traverse the membrane as a helical segment. The Cytoplasmic segment spans residues 1061–1118 (VGFVIVTFQEQGETEYKNCELDKNQRQCVQYALKARPLRCYIPKNPYQYQVWYVVTSS). One copy of the IV repeat lies at 1105-1384 (NPYQYQVWYV…LFVAVIMDNF (280 aa)). A helical transmembrane segment spans residues 1119-1140 (YFEYLMFALIMLNTICLGMQHY). Topologically, residues 1141 to 1148 (HQSEEMNH) are extracellular. Residues 1149–1170 (ISDILNVAFTIIFTLEMILKLL) traverse the membrane as a helical segment. The Cytoplasmic segment spans residues 1171 to 1180 (AFKARGYFGD). Residues 1181-1200 (PWNVFDFLIVIGSIIDVILS) traverse the membrane as a helical segment. At 1201 to 1231 (EIDTFLASSGGLYCLGGGCGNVDPDESARIS) the chain is on the extracellular side. Residues 1232–1250 (SAFFRLFRVMRLIKLLSRA) traverse the membrane as a helical segment. Residues 1251–1268 (EGVRTLLWTFIKSFQALP) lie on the Cytoplasmic side of the membrane. A helical membrane pass occupies residues 1269-1289 (YVALLIVMLFFIYAVIGMQMF). The Extracellular portion of the chain corresponds to 1290–1311 (GKIALVDGTQINRNNNFQTFPQ). An intramembrane region (pore-forming) is located at residues 1312–1330 (AVLLLFRCATGEAWQEILL). The Selectivity filter of repeat IV motif lies at 1321–1324 (TGEA). Residues 1331–1356 (ACSYGKLCDPESDYAPGEEYTCGTNF) are Extracellular-facing. A dihydropyridine binding region spans residues 1337–1403 (LCDPESDYAP…LGPHHLDEFK (67 aa)). A disulfide bridge connects residues Cys-1338 and Cys-1352. The tract at residues 1349–1391 (EYTCGTNFAYYYFISFYMLCAFLIINLFVAVIMDNFDYLTRDW) is phenylalkylamine binding. The helical transmembrane segment at 1357 to 1381 (AYYYFISFYMLCAFLIINLFVAVIM) threads the bilayer. Residues 1382–1873 (DNFDYLTRDW…SQETLIPPRP (492 aa)) lie on the Cytoplasmic side of the membrane. Residues 1522–1542 (KFYATFLIQEHFRKFMKRQEE) form an interaction with calmodulin region. Residue Ser-1575 is modified to Phosphoserine; by PKA and CAMK2. Residue Thr-1579 is modified to Phosphothreonine; by CK2. Ser-1617 bears the Phosphoserine; by PKA mark. 2 disordered regions span residues 1689–1782 (EFPG…RPAP) and 1841–1873 (GMASVPGSLSRRSSLGSLDQVQGSQETLIPPRP). Positions 1847-1858 (GSLSRRSSLGSL) are enriched in low complexity.

This sequence belongs to the calcium channel alpha-1 subunit (TC 1.A.1.11) family. CACNA1S subfamily. In terms of assembly, component of a calcium channel complex consisting of a pore-forming alpha subunit (CACNA1S) and the ancillary subunits CACNB1 or CACNB2, CACNG1 and CACNA2D1. The channel complex contains alpha, beta, gamma and delta subunits in a 1:1:1:1 ratio, i.e. it contains either CACNB1 or CACNB2. CACNA1S channel activity is modulated by the auxiliary subunits (CACNB1 or CACNB2, CACNG1 and CACNA2D1). Interacts with DYSF and JSRP1. Interacts with RYR1. Interacts with STAC, STAC2 and STAC3 (via their SH3 domains). Interaction with STAC3 promotes expression at the cell membrane. Interaction with STAC2 promotes expression at the cell membrane, but with much lower efficiency than STAC3. Interaction with STAC1 leads to very low levels expression at the cell membrane, much less than the levels observed upon interaction with STAC3 and STAC2. Interacts with CALM. The alpha-1S subunit is found in two isoforms in the skeletal muscle: a minor form of 212 kDa containing the complete amino acid sequence, and a major form of 190 kDa derived from the full-length form by post-translational proteolysis close to Phe-1690. Post-translationally, phosphorylated. Phosphorylation by PKA activates the calcium channel. Both the minor and major forms are phosphorylated in vitro by PKA. Phosphorylation at Ser-1575 is involved in beta-adrenergic-mediated regulation of the channel. Detected in skeletal muscle T-tubules (at protein level).

The protein resides in the cell membrane. The protein localises to the sarcolemma. It is found in the T-tubule. It catalyses the reaction Ca(2+)(in) = Ca(2+)(out). Its activity is regulated as follows. Channel activity is blocked by dihydropyridines (DHP), phenylalkylamines, and by benzothiazepines. In terms of biological role, pore-forming, alpha-1S subunit of the voltage-gated calcium channel that gives rise to L-type calcium currents in skeletal muscle. Calcium channels containing the alpha-1S subunit play an important role in excitation-contraction coupling in skeletal muscle via their interaction with RYR1, which triggers Ca(2+) release from the sarcplasmic reticulum and ultimately results in muscle contraction. Long-lasting (L-type) calcium channels belong to the 'high-voltage activated' (HVA) group. The protein is Voltage-dependent L-type calcium channel subunit alpha-1S (CACNA1S) of Oryctolagus cuniculus (Rabbit).